We begin with the raw amino-acid sequence, 601 residues long: NADH-quinone oxidoreductase subunit C/D (601 aa).

Positions 1 to 191 (MKLTRDFPSN…DPFMLDAAKQ (191 aa)) are NADH dehydrogenase I subunit C. The NADH dehydrogenase I subunit D stretch occupies residues 215–601 (DYMFLNLGPN…IDFVMSDVDR (387 aa)).

The protein in the N-terminal section; belongs to the complex I 30 kDa subunit family. It in the C-terminal section; belongs to the complex I 49 kDa subunit family. In terms of assembly, NDH-1 is composed of 13 different subunits. Subunits NuoB, CD, E, F, and G constitute the peripheral sector of the complex.

It is found in the cell inner membrane. The enzyme catalyses a quinone + NADH + 5 H(+)(in) = a quinol + NAD(+) + 4 H(+)(out). Functionally, NDH-1 shuttles electrons from NADH, via FMN and iron-sulfur (Fe-S) centers, to quinones in the respiratory chain. The immediate electron acceptor for the enzyme in this species is believed to be ubiquinone. Couples the redox reaction to proton translocation (for every two electrons transferred, four hydrogen ions are translocated across the cytoplasmic membrane), and thus conserves the redox energy in a proton gradient. The sequence is that of NADH-quinone oxidoreductase subunit C/D from Aeromonas salmonicida (strain A449).